Consider the following 375-residue polypeptide: MAEADSFLHLARPLGPVAVGTAPTTAPLNVVIQPQALFSILDHSLRRNADQERVIGTLLGTRSEDGTEVEIRSTFAVGHTETTDQVEVDMEYQKQMLALHLKANPKEVLVGWYATSSELNTFSALIQNFYSGQGDGTWPHPAVHLTVSTEAGKDIETRAYISAPVGVTAERAADSAAFIPVPYEIRYGEAEKSGLEAIGAARDAEERRANIFTDIEALERAIEDVLGMIDRVSRYVESVIDEEAPASTALGQYLLNTLALAPKVEPADIERDFNNHIQDVLVVSYLANTIRTQMELSNRLATAQLTLGGESGSGESGDKRGGQRGGKGGRGGQQRTQERSGEEARAPYPFLCQPRRTRSYEERTNEAQNGKEEKK.

The 137-residue stretch at 30–166 (VVIQPQALFS…TRAYISAPVG (137 aa)) folds into the MPN domain. The tract at residues 307–375 (LGGESGSGES…EAQNGKEEKK (69 aa)) is disordered. Gly residues predominate over residues 323–332 (QRGGKGGRGG). 2 stretches are compositionally biased toward basic and acidic residues: residues 336–345 (TQERSGEEAR) and 358–375 (RSYE…EEKK).

This sequence belongs to the eIF-3 subunit F family. In terms of assembly, component of the eukaryotic translation initiation factor 3 (eIF-3) complex.

Its subcellular location is the cytoplasm. In terms of biological role, component of the eukaryotic translation initiation factor 3 (eIF-3) complex, which is involved in protein synthesis of a specialized repertoire of mRNAs and, together with other initiation factors, stimulates binding of mRNA and methionyl-tRNAi to the 40S ribosome. The eIF-3 complex specifically targets and initiates translation of a subset of mRNAs involved in cell proliferation. The protein is Eukaryotic translation initiation factor 3 subunit F of Aspergillus niger (strain ATCC MYA-4892 / CBS 513.88 / FGSC A1513).